A 64-amino-acid polypeptide reads, in one-letter code: Prokaryotic ubiquitin-like protein Pup (64 aa).

The interval 1 to 36 (MAQEQTKRGGGGGDDEDVTGTTAAGQERRKKLAQDT) is disordered. The interval 21–58 (TTAAGQERRKKLAQDTDDLLDEIDDVLEENAEDFVRAY) is ARC ATPase binding. Residues 26–52 (QERRKKLAQDTDDLLDEIDDVLEENAE) are a coiled coil. Q64 bears the Deamidated glutamine mark. Residue Q64 forms an Isoglutamyl lysine isopeptide (Gln-Lys) (interchain with K-? in acceptor proteins) linkage.

It belongs to the prokaryotic ubiquitin-like protein family. As to quaternary structure, strongly interacts with the proteasome-associated ATPase ARC through a hydrophobic interface; the interacting region of Pup lies in its C-terminal half. There is one Pup binding site per ARC hexamer ring. In terms of processing, is modified by deamidation of its C-terminal glutamine to glutamate by the deamidase Dop, a prerequisite to the subsequent pupylation process.

It functions in the pathway protein degradation; proteasomal Pup-dependent pathway. Protein modifier that is covalently attached to lysine residues of substrate proteins, thereby targeting them for proteasomal degradation. The tagging system is termed pupylation. In Mycobacterium ulcerans (strain Agy99), this protein is Prokaryotic ubiquitin-like protein Pup.